Reading from the N-terminus, the 117-residue chain is Protein OPG035 (117 aa).

The protein belongs to the poxviridae OPG035 family.

In terms of biological role, bcl-2-like protein which contributes to virulence by preventing host NF-kappa-B activation in response to pro-inflammatory stimuli such as TNF-alpha or IL1B. This Homo sapiens (Human) protein is Protein OPG035 (OPG035).